The primary structure comprises 448 residues: Methylenetetrahydrofolate--tRNA-(uracil-5-)-methyltransferase TrmFO (448 aa).

Residue 13-18 (GAGLAG) coordinates FAD.

Belongs to the MnmG family. TrmFO subfamily. It depends on FAD as a cofactor.

The protein resides in the cytoplasm. It catalyses the reaction uridine(54) in tRNA + (6R)-5,10-methylene-5,6,7,8-tetrahydrofolate + NADH + H(+) = 5-methyluridine(54) in tRNA + (6S)-5,6,7,8-tetrahydrofolate + NAD(+). The enzyme catalyses uridine(54) in tRNA + (6R)-5,10-methylene-5,6,7,8-tetrahydrofolate + NADPH + H(+) = 5-methyluridine(54) in tRNA + (6S)-5,6,7,8-tetrahydrofolate + NADP(+). Catalyzes the folate-dependent formation of 5-methyl-uridine at position 54 (M-5-U54) in all tRNAs. The sequence is that of Methylenetetrahydrofolate--tRNA-(uracil-5-)-methyltransferase TrmFO from Streptococcus pyogenes serotype M5 (strain Manfredo).